The following is a 1462-amino-acid chain: DNA topoisomerase 2 (1462 aa).

Residues Asn-79, Asn-108, Ser-136–Asn-138, and Gly-149–Lys-156 each bind ATP. An interaction with DNA region spans residues Asn-332–Lys-334. Gln-365–Lys-367 is a binding site for ATP. The Toprim domain maps to Cys-442–Val-556. 3 residues coordinate Mg(2+): Glu-448, Asp-525, and Asp-527. The region spanning Lys-671–Leu-1131 is the Topo IIA-type catalytic domain. Catalysis depends on Tyr-761, which acts as the O-(5'-phospho-DNA)-tyrosine intermediate. Residues Lys-947–Asn-956 are interaction with DNA. Disordered regions lie at residues Pro-1040–Val-1077 and Glu-1147–Asp-1462. Acidic residues predominate over residues Asn-1056 to Pro-1068. Positions Pro-1167–Ala-1181 are enriched in basic residues. Residues Ala-1198–Val-1207 are compositionally biased toward low complexity. The span at Ile-1240–Met-1250 shows a compositional bias: polar residues. A compositionally biased stretch (basic residues) spans Ala-1260–Ser-1275. The segment covering Ser-1282 to Glu-1300 has biased composition (acidic residues). Composition is skewed to low complexity over residues Lys-1314–Ala-1334 and Ala-1419–Ala-1430. The segment covering Ser-1442–Asp-1462 has biased composition (acidic residues).

The protein belongs to the type II topoisomerase family. As to quaternary structure, homodimer. The cofactor is Mg(2+). Requires Mn(2+) as cofactor. Ca(2+) is required as a cofactor. Abundant in proliferative tissues.

It carries out the reaction ATP-dependent breakage, passage and rejoining of double-stranded DNA.. Its function is as follows. Control of topological states of DNA by transient breakage and subsequent rejoining of DNA strands. Topoisomerase II makes double-strand breaks. The sequence is that of DNA topoisomerase 2 (TOP2) from Pisum sativum (Garden pea).